The following is a 157-amino-acid chain: 6,7-dimethyl-8-ribityllumazine synthase (157 aa).

5-amino-6-(D-ribitylamino)uracil contacts are provided by residues Phe-26, 60–62 (ALE), and 86–88 (AVI). A (2S)-2-hydroxy-3-oxobutyl phosphate-binding site is contributed by 91–92 (ET). His-94 (proton donor) is an active-site residue. Asn-119 lines the 5-amino-6-(D-ribitylamino)uracil pocket. Arg-133 contributes to the (2S)-2-hydroxy-3-oxobutyl phosphate binding site.

It belongs to the DMRL synthase family.

The enzyme catalyses (2S)-2-hydroxy-3-oxobutyl phosphate + 5-amino-6-(D-ribitylamino)uracil = 6,7-dimethyl-8-(1-D-ribityl)lumazine + phosphate + 2 H2O + H(+). It participates in cofactor biosynthesis; riboflavin biosynthesis; riboflavin from 2-hydroxy-3-oxobutyl phosphate and 5-amino-6-(D-ribitylamino)uracil: step 1/2. Catalyzes the formation of 6,7-dimethyl-8-ribityllumazine by condensation of 5-amino-6-(D-ribitylamino)uracil with 3,4-dihydroxy-2-butanone 4-phosphate. This is the penultimate step in the biosynthesis of riboflavin. The protein is 6,7-dimethyl-8-ribityllumazine synthase of Laribacter hongkongensis (strain HLHK9).